The following is a 479-amino-acid chain: Oxysterol-binding protein homolog C23B6.01c (479 aa).

4 positions are modified to phosphoserine: Ser328, Ser408, Ser409, and Ser421. A compositionally biased stretch (basic and acidic residues) spans 404–418; the sequence is KPEDSSIHKHSRDAS. The tract at residues 404–479 is disordered; the sequence is KPEDSSIHKH…KLHEEQDPAL (76 aa). The segment covering 439 to 452 has biased composition (polar residues); sequence QSTASFVTYRSDNG. Basic and acidic residues predominate over residues 470–479; that stretch reads KLHEEQDPAL.

The protein belongs to the OSBP family.

Its subcellular location is the cytoplasm. The protein resides in the nucleus. This is Oxysterol-binding protein homolog C23B6.01c from Schizosaccharomyces pombe (strain 972 / ATCC 24843) (Fission yeast).